The sequence spans 138 residues: MSDAVDKMLAGMAANRQTMNRQLAKIDEIMERSNNTLLHIESNSKAFSQNVALSETQKMYNLRPEAEMTLSKILENFKLLMSSSDQREETYSALEGCLAYRHRVEHLGSSVRKLVALYDTVGQMKNSQEEQYASEDSP.

In terms of assembly, component of the augmin complex composed of dgt2, dgt3, dgt4, dgt5, dgt6, msd1, msd5 and wac. The complex interacts directly or indirectly with microtubules and is required for centrosome-independent generation of spindle microtubules.

The protein resides in the cytoplasm. The protein localises to the cytoskeleton. It is found in the spindle. In terms of biological role, as part of the augmin complex, plays a role in centrosome-independent generation of spindle microtubules. The complex is required for mitotic spindle assembly through its involvement in localizing gamma-tubulin to spindle microtubules. msd1 is required for microtubule nucleation from within the mitotic spindle and for localization of Grip71 to centrosomes and mitotic spindle. The sequence is that of Augmin complex subunit msd1 from Drosophila melanogaster (Fruit fly).